The chain runs to 157 residues: Protein Smg (157 aa).

The protein belongs to the Smg family.

This Shigella boydii serotype 18 (strain CDC 3083-94 / BS512) protein is Protein Smg.